The following is a 132-amino-acid chain: MQATDVIADMLTRIRNACSAKHETVDIPASNIKRAIANILLEEGYIKGIEEIDDGKQGVLRLKLKYTANKQNVISGLKRISKPGLRVYAGKSEIPKVLGGLGIAIISTSKGIMTDKKARAEGVGGEVLAFVW.

It belongs to the universal ribosomal protein uS8 family. As to quaternary structure, part of the 30S ribosomal subunit. Contacts proteins S5 and S12.

Functionally, one of the primary rRNA binding proteins, it binds directly to 16S rRNA central domain where it helps coordinate assembly of the platform of the 30S subunit. The chain is Small ribosomal subunit protein uS8 from Acetivibrio thermocellus (strain ATCC 27405 / DSM 1237 / JCM 9322 / NBRC 103400 / NCIMB 10682 / NRRL B-4536 / VPI 7372) (Clostridium thermocellum).